We begin with the raw amino-acid sequence, 1133 residues long: Fas-binding factor 1 (1133 aa).

Disordered stretches follow at residues 89-198 and 211-544; these read LGLK…TPIR and IMAT…VPVQ. Positions 102 to 113 are enriched in basic and acidic residues; sequence AAKDPGKGELPN. Low complexity predominate over residues 125–134; that stretch reads KKSLPSPSSS. Position 142 is a phosphoserine (Ser-142). The span at 165-182 shows a compositional bias: polar residues; the sequence is PPVTQSKTASDKSPSTVR. Basic and acidic residues-rich tracts occupy residues 221–245 and 259–276; these read PKAE…DELL and TGEH…RPQD. Over residues 277–286 the composition is skewed to acidic residues; that stretch reads SEDMWGDEDF. The span at 295-310 shows a compositional bias: low complexity; the sequence is VVSSEGRQSRRQSVSR. The span at 325–336 shows a compositional bias: polar residues; the sequence is SKQSPPMASSPI. The segment covering 415–424 has biased composition (basic and acidic residues); it reads ASKEEKEDWL. The segment covering 459–469 has biased composition (polar residues); sequence SGSQPLTSTQG. The segment covering 473–482 has biased composition (low complexity); sequence AAAGGSSGTT. 2 coiled-coil regions span residues 577-727 and 773-870; these read AELQ…VDAA and IRQR…EEQK. Residue Lys-960 forms a Glycyl lysine isopeptide (Lys-Gly) (interchain with G-Cter in SUMO2) linkage. A disordered region spans residues 1062-1085; it reads AASSQSALMPPAPTTRWCSQPPTG.

In terms of assembly, may interact with FAS cytoplasmic domain. Interacts with PARD3. Interacts with TRAPPC14. In terms of tissue distribution, present in various epithelial cells (at protein level).

The protein resides in the cytoplasm. It is found in the cytoskeleton. Its subcellular location is the microtubule organizing center. It localises to the centrosome. The protein localises to the centriole. The protein resides in the spindle pole. It is found in the cell junction. Its function is as follows. Keratin-binding protein required for epithelial cell polarization. Involved in apical junction complex (AJC) assembly via its interaction with PARD3. Required for ciliogenesis. In Homo sapiens (Human), this protein is Fas-binding factor 1 (FBF1).